A 192-amino-acid chain; its full sequence is Ferritin-like protein (192 aa).

Positions 44, 48, and 102 each coordinate Fe(3+). Residues 143–179 (RFDHDYADPHAHHDEHRDHLADMPSAGSSHEEVQPVA) form a linker region. Residues 149–163 (ADPHAHHDEHRDHLA) show a composition bias toward basic and acidic residues. Positions 149 to 192 (ADPHAHHDEHRDHLADMPSAGSSHEEVQPVAHKKKGFTVGSLIQ) are disordered. The segment at 180–192 (HKKKGFTVGSLIQ) is targeting peptide.

As to quaternary structure, homodimer, with 2 Fe atoms bound at the subunit interface (without encapsulin), probably also a dimer when encapsulated. 42 electron-dense accretions can be seen inside the nanocompartment which are probably this cargo protein, although perhaps up to one cargo dimer can be bound per shell protein.

It localises to the encapsulin nanocompartment. It catalyses the reaction 4 Fe(2+) + O2 + 4 H(+) = 4 Fe(3+) + 2 H2O. Cargo protein of a type 1 encapsulin nanocompartment. A ferritin-like iron-binding protein probably involved in iron mineralization in the encapsulin nanocompartment. Has ferroxidase activity even when encapsulated, the rate is probably controlled by the rate of Fe flux across the nanocompartment pores. Part of the iron-mineralizing encapsulin-associated Firmicute (IMEF) system. 2 different cargo proteins have been identified (IMEF and Fer); when both are expressed in E.coli with the shell protein only IMEF is detected within the nanocompartment. E.coli expressing all 3 genes stores the largest amount of iron and is protected from Fe/H2O2-induced oxidative stress. The sequence is that of Ferritin-like protein from Bacillus thermotolerans (Quasibacillus thermotolerans).